Consider the following 123-residue polypeptide: Large ribosomal subunit protein uL29 (123 aa).

It belongs to the universal ribosomal protein uL29 family. In terms of assembly, component of the large ribosomal subunit.

It localises to the cytoplasm. Its function is as follows. Component of the large ribosomal subunit. The ribosome is a large ribonucleoprotein complex responsible for the synthesis of proteins in the cell. Plays an essential role in early embryonic development. May act as a haploinsufficient tumor suppressor. In Danio rerio (Zebrafish), this protein is Large ribosomal subunit protein uL29 (rpl35).